Consider the following 465-residue polypeptide: Gamma-aminobutyric acid receptor subunit rho-2 (465 aa).

The signal sequence occupies residues 1–20; sequence MPYFMRLALFLFCLMALVES. The Extracellular portion of the chain corresponds to 21–260; that stretch reads RKPRRKRWTG…LYINFTLRRH (240 aa). Arginine 105 provides a ligand contact to 4-aminobutanoate. Asparagine 120 carries N-linked (GlcNAc...) asparagine glycosylation. Serine 169 is a 4-aminobutanoate binding site. An intrachain disulfide couples cysteine 178 to cysteine 192. Glutamate 197 provides a ligand contact to 4-aminobutanoate. N-linked (GlcNAc...) asparagine glycosylation occurs at asparagine 254. Residues 261–281 traverse the membrane as a helical segment; it reads IFFFLLQTYFPATLMVMLSWV. Residues 282–293 are Cytoplasmic-facing; the sequence is SFWIDHRAVPAR. A helical membrane pass occupies residues 294–314; sequence VSLGIMTVLTMSTIITGVNAS. Residues 315-325 lie on the Extracellular side of the membrane; sequence MPRVSYIRAVD. Residues 326–346 traverse the membrane as a helical segment; that stretch reads IYLWVSFVFVFLSVLEYAAVN. Residues 347-443 are Cytoplasmic-facing; the sequence is YLTTVQEQKE…IFQNTHAIDK (97 aa). The helical transmembrane segment at 444-464 threads the bilayer; it reads YSRLIFPAFYIVFNLIYWSVF. Position 465 (serine 465) is a topological domain, extracellular.

It belongs to the ligand-gated ion channel (TC 1.A.9) family. Gamma-aminobutyric acid receptor (TC 1.A.9.5) subfamily. GABRR2 sub-subfamily. Three rho subunits (rho-1/GBRR1, rho-2/GBRR2 and rho-3/GBRR3) coassemble either to form functional homopentamers or heteropentamers. Rho-2 is unable to form a functional homopentamer. Interacts with SQSTM1. Expressed in spinal cord and in cerebellum. Expressed in retina.

Its subcellular location is the postsynaptic cell membrane. The protein resides in the cell membrane. It catalyses the reaction chloride(in) = chloride(out). In contrast with rho-1 and rho-3 homopentamers, rho-2 GABAARs are not inhibited by picrotoxin. Rho subunit of the pentameric ligand-gated chloride channels responsible for mediating the effects of gamma-aminobutyric acid (GABA), the major inhibitory neurotransmitter in the brain. Rho-containing GABA-gated chloride channels are a subclass of GABA(A) receptors (GABAARs) entirely composed of rho subunits, where GABA molecules bind at the rho intersubunit interfaces. When activated by GABA, rho-GABAARs selectively allow the flow of chloride anions across the cell membrane down their electrochemical gradient. Rho-2 GABAARs may contribute to the regulation of glial development in the cerebellum by controlling extrasynaptic transmission. Rho-2 GABAARs are also involved in neuronal tonic (extrasynaptic) and phasic (synaptic) transmission in the Purkinje neurons of the cerebellum. Rho-2 GABAARs expressed in retina may play a role in retinal neurotransmission. This is Gamma-aminobutyric acid receptor subunit rho-2 from Rattus norvegicus (Rat).